We begin with the raw amino-acid sequence, 513 residues long: ATP synthase subunit alpha (513 aa).

Position 169–176 (169–176 (GDRQTGKT)) interacts with ATP.

Belongs to the ATPase alpha/beta chains family. In terms of assembly, F-type ATPases have 2 components, CF(1) - the catalytic core - and CF(0) - the membrane proton channel. CF(1) has five subunits: alpha(3), beta(3), gamma(1), delta(1), epsilon(1). CF(0) has three main subunits: a(1), b(2) and c(9-12). The alpha and beta chains form an alternating ring which encloses part of the gamma chain. CF(1) is attached to CF(0) by a central stalk formed by the gamma and epsilon chains, while a peripheral stalk is formed by the delta and b chains.

The protein localises to the cell inner membrane. It carries out the reaction ATP + H2O + 4 H(+)(in) = ADP + phosphate + 5 H(+)(out). In terms of biological role, produces ATP from ADP in the presence of a proton gradient across the membrane. The alpha chain is a regulatory subunit. This is ATP synthase subunit alpha from Citrobacter koseri (strain ATCC BAA-895 / CDC 4225-83 / SGSC4696).